Here is a 110-residue protein sequence, read N- to C-terminus: uncharacterized protein (110 aa).

Transmembrane regions (helical) follow at residues 5-25 (ILAIIFVAVGTYLIRYIPIHL), 62-82 (FPIIFSNVLISTISLIFAIVS), and 90-110 (GISILISVVIYYLASKFLISI).

To A.fulgidus AF1754.

Its subcellular location is the cell membrane. This is an uncharacterized protein from Methanocaldococcus jannaschii (strain ATCC 43067 / DSM 2661 / JAL-1 / JCM 10045 / NBRC 100440) (Methanococcus jannaschii).